The sequence spans 130 residues: Small ribosomal subunit protein uS9 (130 aa).

This sequence belongs to the universal ribosomal protein uS9 family.

The chain is Small ribosomal subunit protein uS9 from Buchnera aphidicola subsp. Acyrthosiphon pisum (strain 5A).